A 236-amino-acid polypeptide reads, in one-letter code: Small ribosomal subunit protein uS2c (236 aa).

This sequence belongs to the universal ribosomal protein uS2 family.

It is found in the plastid. The protein resides in the chloroplast. This Illicium oligandrum (Star anise) protein is Small ribosomal subunit protein uS2c (rps2).